Consider the following 398-residue polypeptide: MAGGPHFIRKNGWVDENRPTRVLLLGSTGSIGTQALEVVAANPDKFTVVGLAAGGANVELLDRQIRETGVSSVAVADPSAAASLARPGVLSGPDAVTELVRTTEADVVLNALVGSLGLEPTLAALESGARLALANKESLVAGGPLVTAAAAPGQIVPVDSEHSALAQCLRGGSADEVDRLVLTASGGPFRGWTADRLESVTPEQAGAHPTWSMGPMNTLNSATLVNKGLELIETHLLFGVDYDRIDVTVHPQSIVHSMVTFTDGSTLAQASPPDMKLPIALALGWPHRIAGAAAACDFSTASTWDFEPLDSQVFPAVDLAREAGKGGGCLTAVYNAANEVAAQAFLDGIIRFPRIVRTVASVLSEADEWSAPPATVEDVLAADGWARERARQLVKQEG.

Thr-28, Gly-29, Ser-30, Ile-31, Gly-54, Asn-57, and Asn-135 together coordinate NADPH. Residue Lys-136 coordinates 1-deoxy-D-xylulose 5-phosphate. Residue Glu-137 participates in NADPH binding. Asp-159 serves as a coordination point for Mn(2+). 1-deoxy-D-xylulose 5-phosphate is bound by residues Ser-160, Glu-161, Ser-185, and His-208. Glu-161 lines the Mn(2+) pocket. Gly-214 contributes to the NADPH binding site. 1-deoxy-D-xylulose 5-phosphate-binding residues include Ser-221, Asn-226, Lys-227, and Glu-230. Position 230 (Glu-230) interacts with Mn(2+).

Belongs to the DXR family. Mg(2+) serves as cofactor. It depends on Mn(2+) as a cofactor.

The catalysed reaction is 2-C-methyl-D-erythritol 4-phosphate + NADP(+) = 1-deoxy-D-xylulose 5-phosphate + NADPH + H(+). The protein operates within isoprenoid biosynthesis; isopentenyl diphosphate biosynthesis via DXP pathway; isopentenyl diphosphate from 1-deoxy-D-xylulose 5-phosphate: step 1/6. In terms of biological role, catalyzes the NADPH-dependent rearrangement and reduction of 1-deoxy-D-xylulose-5-phosphate (DXP) to 2-C-methyl-D-erythritol 4-phosphate (MEP). In Rhodococcus jostii (strain RHA1), this protein is 1-deoxy-D-xylulose 5-phosphate reductoisomerase.